Consider the following 132-residue polypeptide: Small ribosomal subunit protein uS11 (132 aa).

Belongs to the universal ribosomal protein uS11 family. In terms of assembly, part of the 30S ribosomal subunit. Interacts with proteins S7 and S18. Binds to IF-3.

Its function is as follows. Located on the platform of the 30S subunit, it bridges several disparate RNA helices of the 16S rRNA. Forms part of the Shine-Dalgarno cleft in the 70S ribosome. This is Small ribosomal subunit protein uS11 from Chlamydia trachomatis serovar D (strain ATCC VR-885 / DSM 19411 / UW-3/Cx).